A 547-amino-acid polypeptide reads, in one-letter code: MGKTLTIVMLVFVSMAGWMFGADTGSIGGITNMRDFQSRFADRYNPVTDTYSYSSARQGLITGMVNVGSMTGCILSSPLMDRIGKRVSIMFWTIVYLIGIILQVTAVPSWVQIMVAKIWTGLAIGALSVLAPGFQSEVAPATLRGTIVTTYQLAVTGGIFIAACINMGTHKLHKTAQWRVSMGINLLWGIIMFIGISFLPESPRYLIAIGKDEEALDIMCKNNVLPREHEIIQTEYHVIKTDCEAEMAGGPATWGDILGADIRYRTFLGLGVMSLQQLTGDNYYFYYGFEVFEGTGMNSPYLSALILDAVNFGCTFGGLFVLEFFGRRMPLIIGGVWQSITFFIYAAVGNRALTRKNGTSNHRAGAVMIVFSCLFIFSFAQTWGPAAYVIVGESYPIRYRSKCAAVATTGNWLWGFLITFFTPFISDSIGFKYGYIFAACNLCAACIIFLFAHETKGLTLEEINELYLSGAKPWMPRPENLGQAAKQQQEVLEKSRGVQGESAAHLENVDNEGMEDTSSNDITSSTSSSEGRAKPESNYVDEQDRYA.

The N-terminal 21 residues, 1–21 (MGKTLTIVMLVFVSMAGWMFG), are a transit peptide targeting the mitochondrion. Over 22–86 (ADTGSIGGIT…SPLMDRIGKR (65 aa)) the chain is Mitochondrial intermembrane. A helical transmembrane segment spans residues 87–107 (VSIMFWTIVYLIGIILQVTAV). Over 108-112 (PSWVQ) the chain is Cytoplasmic. The chain crosses the membrane as a helical span at residues 113-133 (IMVAKIWTGLAIGALSVLAPG). The Mitochondrial intermembrane segment spans residues 134–144 (FQSEVAPATLR). The chain crosses the membrane as a helical span at residues 145 to 165 (GTIVTTYQLAVTGGIFIAACI). Topologically, residues 166–179 (NMGTHKLHKTAQWR) are cytoplasmic. The helical transmembrane segment at 180 to 200 (VSMGINLLWGIIMFIGISFLP) threads the bilayer. The Mitochondrial intermembrane segment spans residues 201–304 (ESPRYLIAIG…TGMNSPYLSA (104 aa)). Residues 305–325 (LILDAVNFGCTFGGLFVLEFF) form a helical membrane-spanning segment. Residues 326 to 328 (GRR) lie on the Cytoplasmic side of the membrane. Residues 329 to 349 (MPLIIGGVWQSITFFIYAAVG) traverse the membrane as a helical segment. The Mitochondrial intermembrane segment spans residues 350 to 363 (NRALTRKNGTSNHR). Residues 364-384 (AGAVMIVFSCLFIFSFAQTWG) form a helical membrane-spanning segment. Topologically, residues 385-404 (PAAYVIVGESYPIRYRSKCA) are cytoplasmic. The chain crosses the membrane as a helical span at residues 405-425 (AVATTGNWLWGFLITFFTPFI). Residues 426-432 (SDSIGFK) lie on the Mitochondrial intermembrane side of the membrane. A helical membrane pass occupies residues 433–453 (YGYIFAACNLCAACIIFLFAH). Topologically, residues 454–547 (ETKGLTLEEI…NYVDEQDRYA (94 aa)) are cytoplasmic. Residues 482-547 (GQAAKQQQEV…NYVDEQDRYA (66 aa)) form a disordered region. Positions 517-529 (TSSNDITSSTSSS) are enriched in low complexity. Serine 519 carries the post-translational modification Phosphoserine. Phosphothreonine occurs at positions 523 and 526. Serine 527, serine 528, serine 529, and serine 537 each carry phosphoserine.

Belongs to the major facilitator superfamily. Sugar transporter (TC 2.A.1.1) family.

The protein resides in the mitochondrion membrane. In Schizosaccharomyces pombe (strain 972 / ATCC 24843) (Fission yeast), this protein is Probable high-affinity hexose transporter ght8, mitochondrial (ght8).